We begin with the raw amino-acid sequence, 150 residues long: 3-hydroxyacyl-[acyl-carrier-protein] dehydratase FabZ (150 aa).

His-52 is a catalytic residue.

It belongs to the thioester dehydratase family. FabZ subfamily.

Its subcellular location is the cytoplasm. The enzyme catalyses a (3R)-hydroxyacyl-[ACP] = a (2E)-enoyl-[ACP] + H2O. In terms of biological role, involved in unsaturated fatty acids biosynthesis. Catalyzes the dehydration of short chain beta-hydroxyacyl-ACPs and long chain saturated and unsaturated beta-hydroxyacyl-ACPs. The protein is 3-hydroxyacyl-[acyl-carrier-protein] dehydratase FabZ of Albidiferax ferrireducens (strain ATCC BAA-621 / DSM 15236 / T118) (Rhodoferax ferrireducens).